We begin with the raw amino-acid sequence, 487 residues long: Glutamyl-tRNA(Gln) amidotransferase subunit A (487 aa).

Residues Lys-79 and Ser-158 each act as charge relay system in the active site. Catalysis depends on Ser-182, which acts as the Acyl-ester intermediate.

This sequence belongs to the amidase family. GatA subfamily. In terms of assembly, heterotrimer of A, B and C subunits.

The catalysed reaction is L-glutamyl-tRNA(Gln) + L-glutamine + ATP + H2O = L-glutaminyl-tRNA(Gln) + L-glutamate + ADP + phosphate + H(+). In terms of biological role, allows the formation of correctly charged Gln-tRNA(Gln) through the transamidation of misacylated Glu-tRNA(Gln) in organisms which lack glutaminyl-tRNA synthetase. The reaction takes place in the presence of glutamine and ATP through an activated gamma-phospho-Glu-tRNA(Gln). The protein is Glutamyl-tRNA(Gln) amidotransferase subunit A of Ehrlichia ruminantium (strain Welgevonden).